The sequence spans 253 residues: 5-oxoprolinase subunit A (253 aa).

This sequence belongs to the LamB/PxpA family. In terms of assembly, forms a complex composed of PxpA, PxpB and PxpC.

The catalysed reaction is 5-oxo-L-proline + ATP + 2 H2O = L-glutamate + ADP + phosphate + H(+). Catalyzes the cleavage of 5-oxoproline to form L-glutamate coupled to the hydrolysis of ATP to ADP and inorganic phosphate. The protein is 5-oxoprolinase subunit A of Bacillus cereus (strain Q1).